A 479-amino-acid polypeptide reads, in one-letter code: Poly(A) polymerase catalytic subunit (479 aa).

Active-site residues include D202 and D204. Ca(2+) is bound by residues D202, D204, and D253.

This sequence belongs to the poxviridae poly(A) polymerase catalytic subunit family. As to quaternary structure, heterodimer of a large (catalytic) subunit and a small (regulatory) subunit.

It carries out the reaction RNA(n) + ATP = RNA(n)-3'-adenine ribonucleotide + diphosphate. Polymerase that creates the 3'-poly(A) tail of mRNA's. The polypeptide is Poly(A) polymerase catalytic subunit (OPG063) (Mus musculus (Mouse)).